Consider the following 306-residue polypeptide: uncharacterized protein (306 aa).

Residues 277–306 (TEIIQNYKIANELKKEKQQNKKKNSIELEE) adopt a coiled-coil conformation.

This is an uncharacterized protein from Saccharolobus islandicus (Sulfolobus islandicus).